The primary structure comprises 226 residues: DELTA-thalatoxin-Avl1b (226 aa).

Positions 1 to 21 are cleaved as a signal peptide; that stretch reads MRHFVVFLYMFLALSIPTAFA. Residues 22-45 constitute a propeptide that is removed on maturation; it reads KKHIVTKKGNHQDITNDNEGENAE. Residues 50 to 59 are plays an important role in the hemolytic activity; that stretch reads AVAGAVIAGG. Residues 58–77 form an N-terminal region region; it reads GGELALKILTKILDEIGKID. Positions 101, 134, 152, 154, 180, and 184 each coordinate phosphocholine. The tract at residues 152–167 is trp-rich region, which is important for the binding to lipid membrane; it reads SVPFDYNLYTNWWNVK. Residues 191-193 carry the Cell attachment site, crucial for protein stability motif; the sequence is KPS.

Belongs to the actinoporin family. Sea anemone subfamily. In terms of assembly, octamer or nonamer in membranes. Monomer in the soluble state.

The protein resides in the secreted. It is found in the nematocyst. Its subcellular location is the target cell membrane. Functionally, pore-forming protein that forms cations-selective hydrophilic pores of around 1 nm and causes cytolysis. Pore formation is a multi-step process that involves specific recognition of membrane sphingomyelin (but neither cholesterol nor phosphatidylcholine) using aromatic rich region and adjacent phosphocholine (POC) binding site, firm binding to the membrane (mainly driven by hydrophobic interactions) accompanied by the transfer of the N-terminal region to the lipid-water interface and finally pore formation after oligomerization of monomers. In Actineria villosa (Okinawan sea anemone), this protein is DELTA-thalatoxin-Avl1b.